Here is a 151-residue protein sequence, read N- to C-terminus: Ribosome maturation factor RimP (151 aa).

It belongs to the RimP family.

The protein resides in the cytoplasm. Functionally, required for maturation of 30S ribosomal subunits. This chain is Ribosome maturation factor RimP, found in Shewanella piezotolerans (strain WP3 / JCM 13877).